The chain runs to 123 residues: Ferredoxin-5 (123 aa).

The region spanning 2-119 (PNITFTSPIM…DVMVHFTGTP (118 aa)) is the 2Fe-2S ferredoxin-type domain. [2Fe-2S] cluster contacts are provided by Cys42, Cys47, Cys50, and Cys102.

It belongs to the 2Fe2S plant-type ferredoxin family. [2Fe-2S] cluster serves as cofactor.

Its function is as follows. Ferredoxins are iron-sulfur proteins that transfer electrons in a wide variety of metabolic reactions. This ferredoxin probably participates in nitrogen fixation. The polypeptide is Ferredoxin-5 (fdxD) (Rhodobacter capsulatus (Rhodopseudomonas capsulata)).